A 349-amino-acid chain; its full sequence is Dihydroorotate dehydrogenase (quinone) (349 aa).

FMN contacts are provided by residues 67 to 71 (AGLDK) and Thr91. Lys71 is a binding site for substrate. 116–120 (NRLGF) provides a ligand contact to substrate. Residues Asn147 and Asn180 each contribute to the FMN site. Position 180 (Asn180) interacts with substrate. Ser183 acts as the Nucleophile in catalysis. Asn185 contacts substrate. Positions 225 and 253 each coordinate FMN. Residue 254-255 (NT) participates in substrate binding. Residues Gly276, Gly305, and 326–327 (YT) each bind FMN.

This sequence belongs to the dihydroorotate dehydrogenase family. Type 2 subfamily. Monomer. It depends on FMN as a cofactor.

The protein localises to the cell membrane. The catalysed reaction is (S)-dihydroorotate + a quinone = orotate + a quinol. It participates in pyrimidine metabolism; UMP biosynthesis via de novo pathway; orotate from (S)-dihydroorotate (quinone route): step 1/1. Functionally, catalyzes the conversion of dihydroorotate to orotate with quinone as electron acceptor. In Bordetella parapertussis (strain 12822 / ATCC BAA-587 / NCTC 13253), this protein is Dihydroorotate dehydrogenase (quinone).